We begin with the raw amino-acid sequence, 130 residues long: MAEFPAELYYSKNHEWMRKESDETFTVGITDHAQEQLGDLVFVELPETNIHVDAGDEVAVVESVKTAADVYSPLSGKVIEINNALENEPATVNRDPYGDGWLYRITIDDEKELNDLLDADGYQTLIEAES.

In terms of domain architecture, Lipoyl-binding spans 24-106 (TFTVGITDHA…YGDGWLYRIT (83 aa)). Lys65 is modified (N6-lipoyllysine).

This sequence belongs to the GcvH family. The glycine cleavage system is composed of four proteins: P, T, L and H. (R)-lipoate serves as cofactor.

Its function is as follows. The glycine cleavage system catalyzes the degradation of glycine. The H protein shuttles the methylamine group of glycine from the P protein to the T protein. The polypeptide is Glycine cleavage system H protein (Coxiella burnetii (strain CbuK_Q154) (Coxiella burnetii (strain Q154))).